Consider the following 550-residue polypeptide: Homeobox and leucine zipper protein Homez (550 aa).

Residues methionine 1 to glycine 10 show a composition bias toward pro residues. The disordered stretch occupies residues methionine 1 to serine 36. The segment at residues tryptophan 55–tryptophan 114 is a DNA-binding region (homeobox 1). The segment at glycine 168–glutamine 199 is disordered. Glycyl lysine isopeptide (Lys-Gly) (interchain with G-Cter in SUMO2) cross-links involve residues lysine 182, lysine 200, and lysine 202. Positions leucine 223 to proline 265 are disordered. Positions proline 237–glutamine 256 are enriched in polar residues. Residue serine 351 is modified to Phosphoserine. 2 DNA-binding regions (homeobox) span residues glutamine 355–glutamine 415 and threonine 451–valine 510. The Nuclear localization signal motif lies at arginine 358–lysine 363. Disordered stretches follow at residues valine 424–proline 465 and cysteine 512–aspartate 550. Threonine 451 carries the post-translational modification Phosphothreonine. Positions proline 452–isoleucine 463 are enriched in pro residues. Residues leucine 513 to aspartate 550 are compositionally biased toward acidic residues.

In terms of assembly, homodimer or heterodimer (Potential). Interacts with HOXC8. In terms of tissue distribution, ubiquitous. Strongly expressed in adult testis and kidney as well as fetal lung and kidney.

It is found in the nucleus. In terms of biological role, may function as a transcriptional regulator. In Homo sapiens (Human), this protein is Homeobox and leucine zipper protein Homez (HOMEZ).